Consider the following 92-residue polypeptide: Protein S100-A12 (92 aa).

2 EF-hand domains span residues 13–48 (NIFH…LKNT) and 49–84 (KDQG…VLIT). Cu cation is bound at residue His-16. His-16 serves as a coordination point for Zn(2+). Positions 19 and 24 each coordinate Ca(2+). Asp-26 provides a ligand contact to Cu cation. A Zn(2+)-binding site is contributed by Asp-26. Residues Thr-27 and Glu-32 each coordinate Ca(2+). Residues 38–53 (TKELPNTLKNTKDQGT) are hinge domain. Ca(2+)-binding residues include Asp-62, Asn-64, Asp-66, Gln-68, and Glu-73. Cu cation contacts are provided by His-86 and His-90. Zn(2+)-binding residues include His-86 and His-90.

The protein belongs to the S-100 family. Homodimer. Homooligomer (tetramer or hexamer) in the presence of calcium, zinc and copper ions. Interacts with AGER and both calcium and zinc are essential for the interaction. Interacts with CACYBP in a calcium-dependent manner. As to expression, found essentially in granulocytes with small amounts found in lymphocytes.

The protein localises to the secreted. It localises to the cytoplasm. The protein resides in the cytoskeleton. It is found in the cell membrane. Its function is as follows. S100A12 is a calcium-, zinc- and copper-binding protein which plays a prominent role in the regulation of inflammatory processes and immune response. Its pro-inflammatory activity involves recruitment of leukocytes, promotion of cytokine and chemokine production, and regulation of leukocyte adhesion and migration. Acts as an alarmin or a danger associated molecular pattern (DAMP) molecule and stimulates innate immune cells via binding to receptor for advanced glycation endproducts (AGER). Binding to AGER activates the MAP-kinase and NF-kappa-B signaling pathways leading to production of pro-inflammatory cytokines and up-regulation of cell adhesion molecules ICAM1 and VCAM1. Acts as a monocyte and mast cell chemoattractant. Can stimulate mast cell degranulation and activation which generates chemokines, histamine and cytokines inducing further leukocyte recruitment to the sites of inflammation. Can inhibit the activity of matrix metalloproteinases; MMP2, MMP3 and MMP9 by chelating Zn(2+) from their active sites. The polypeptide is Protein S100-A12 (S100A12) (Sus scrofa (Pig)).